The following is a 322-amino-acid chain: Pre-mRNA-splicing factor NTR2 (322 aa).

Residues 1–30 are disordered; sequence MAIKKRNKIRLPSGSPEEVGIDGSAHKPMQ. Ser-40 is subject to Phosphoserine. Positions 113 to 137 are disordered; that stretch reads LLSDSSEAGSSSEGEHISSIPTRGE. Over residues 115-132 the composition is skewed to low complexity; it reads SDSSEAGSSSEGEHISSI. 2 positions are modified to phosphoserine: Ser-153 and Ser-197.

In terms of assembly, component of the NTR complex (NTC-related complex), composed of NTR1, NTR2 and PRP43. Interacts with CLF1, NTR1 and PRP43.

It is found in the cytoplasm. The protein localises to the nucleus. Functionally, involved in pre-mRNA splicing and spliceosome disassembly. Promotes release of excised lariat intron from the spliceosome by acting as a receptor for PRP43. This targeting of PRP43 leads to disassembly of the spliceosome with the separation of the U2, U5, U6 snRNPs and the NTC complex. This Saccharomyces cerevisiae (strain ATCC 204508 / S288c) (Baker's yeast) protein is Pre-mRNA-splicing factor NTR2 (NTR2).